The sequence spans 741 residues: Isocitrate dehydrogenase [NADP] (741 aa).

NADP(+)-binding residues include Asn85 and Ser87. 5 residues coordinate D-threo-isocitrate: Ser132, Asn135, Arg139, Arg145, and Lys255. Asn135 provides a ligand contact to NADP(+). Mn(2+) is bound at residue Asp350. 2 residues coordinate D-threo-isocitrate: Tyr420 and Arg547. Asp548 lines the Mn(2+) pocket. Positions 585, 589, 600, 602, and 649 each coordinate NADP(+).

It belongs to the monomeric-type IDH family. Monomer. Requires Mg(2+) as cofactor. Mn(2+) is required as a cofactor.

It localises to the cytoplasm. It carries out the reaction D-threo-isocitrate + NADP(+) = 2-oxoglutarate + CO2 + NADPH. Activity is inhibited in the presence of Ca(2+). Its function is as follows. Catalyzes the oxidative decarboxylation of isocitrate to 2-oxoglutarate and carbon dioxide with the concomitant reduction of NADP(+). The polypeptide is Isocitrate dehydrogenase [NADP] (Azotobacter vinelandii).